Consider the following 395-residue polypeptide: Multiple organellar RNA editing factor 8, chloroplastic/mitochondrial (395 aa).

A chloroplast and mitochondrion-targeting transit peptide spans 1-56 (MATHTISRSILCRPAKSLSFLFTRSFASSAPLAKSPASSLLSRSRPLVAAFSSVFR). Basic and acidic residues predominate over residues 211–236 (ANERNRRNDRPRNNDRSRNFERRREN). The segment at 211–395 (ANERNRRNDR…RDGSGNPYQG (185 aa)) is disordered. Residues 240–300 (GPPPQRPPMG…GPRHPPPYGA (61 aa)) are compositionally biased toward pro residues. The segment covering 313–334 (QNYGGTPPPNYGGAPPANNMGG) has biased composition (low complexity). Positions 335-355 (APPPNYGGGPPPQYGAVPPPQ) are enriched in pro residues. Residues 356-385 (YGGAPPQNNNYQQQGSGMQQPQYQNNYPPN) show a composition bias toward low complexity.

The protein belongs to the MORF family. In terms of assembly, interacts with protoporphyrinogen oxidase 1 PPOX1. Interacts with PCMP-H52/MEF10. Homodimer and heterodimers with MORF1/RIP8, MORF2/RIP2, MORF3/RIP3, MORF4/RIP4, MORF5/RIP5, MORF6/RIP6 and MORF7/RIP7. Interacts with RBG3/ORRM3. Interacts with PCMP-A2/PMD1. Interacts with ORRM1 and VAT3/OZ1. Interacts with PCMP-H13/MEF35. Interacts with RBG5/ORRM4. Interacts with ORRM6.

It localises to the mitochondrion. The protein resides in the plastid. The protein localises to the chloroplast. Involved in organellar RNA editing. Required for the processing of numerous RNA editing sites in mitochondria and plastids. Binds to the plastid RARE1 factor, a pentatricopeptide repeat-containing protein involved in RNA editing. The chain is Multiple organellar RNA editing factor 8, chloroplastic/mitochondrial from Arabidopsis thaliana (Mouse-ear cress).